A 118-amino-acid polypeptide reads, in one-letter code: V-type proton ATPase subunit G 3 (118 aa).

Residues 3-54 adopt a coiled-coil conformation; the sequence is SQSQGIQQLLQAEKRAKDKLEEAKKRKNKRLRQAKEEATADIDQYRLKREAD. The tract at residues 19–39 is disordered; the sequence is KDKLEEAKKRKNKRLRQAKEE.

This sequence belongs to the V-ATPase G subunit family. As to quaternary structure, V-ATPase is a heteromultimeric enzyme made up of two complexes: the ATP-hydrolytic V1 complex and the proton translocation V0 complex. The V1 complex consists of three catalytic AB heterodimers that form a heterohexamer, three peripheral stalks each consisting of EG heterodimers, one central rotor including subunits D and F, and the regulatory subunits C and H. The proton translocation complex V0 consists of the proton transport subunit a, a ring of proteolipid subunits c9c'', rotary subunit d, subunits e and f, and two accessory subunits.

Subunit of the V1 complex of vacuolar(H+)-ATPase (V-ATPase), a multisubunit enzyme composed of a peripheral complex (V1) that hydrolyzes ATP and a membrane integral complex (V0) that translocates protons. V-ATPase is responsible for acidifying and maintaining the pH of intracellular compartments and in some cell types, is targeted to the plasma membrane, where it is responsible for acidifying the extracellular environment. The protein is V-type proton ATPase subunit G 3 (atp6v1g3) of Xenopus laevis (African clawed frog).